The primary structure comprises 441 residues: Probable magnesium transporter NIPA8 (441 aa).

Residues 1–4 are Extracellular-facing; it reads MGEW. A helical transmembrane segment spans residues 5-25; sequence VIGAFINIFGSVAINFGTNLL. At 26–56 the chain is on the cytoplasmic side; that stretch reads KLGHNERERLALQDGGGKMPLKPIIHNQTWR. The helical transmembrane segment at 57-77 threads the bilayer; that stretch reads VGILVFLLGNCLNFISFGYAA. Residues 78–79 lie on the Extracellular side of the membrane; it reads QS. A helical membrane pass occupies residues 80–100; sequence LLAALGSIQFVSNIAFAYVVL. Residues 101-105 lie on the Cytoplasmic side of the membrane; sequence NKMVT. The chain crosses the membrane as a helical span at residues 106 to 126; the sequence is VKVLVATAFIVLGNVFLVAFG. Residues 127–144 are Extracellular-facing; sequence NHQSPVFTPEQLAEKYSN. A helical transmembrane segment spans residues 145–165; that stretch reads VTFLVYCGILILIVAVHHFLY. Topologically, residues 166-184 are cytoplasmic; that stretch reads RKGEVLISTPGQEISSYWK. A helical membrane pass occupies residues 185–205; that stretch reads MLLPFSYAVVSGAIGSCSVLF. The Extracellular segment spans residues 206–222; it reads AKSLSNLLRLAMSSSYQ. Residues 223–243 traverse the membrane as a helical segment; that stretch reads LHSWFTYSMLLLFLSTAGFWM. Residues 244-255 lie on the Cytoplasmic side of the membrane; it reads TRLNEGLSLYDA. A helical transmembrane segment spans residues 256 to 276; the sequence is ILIVPMFQIAWTFFSICTGCI. Over 277–288 the chain is Extracellular; it reads YFQEFQVFDALR. The helical transmembrane segment at 289–309 threads the bilayer; sequence TTMFILGMMCVFIGISLLAPD. The Cytoplasmic segment spans residues 310–441; sequence DTRGNETKDN…MLEKTISSKA (132 aa). A disordered region spans residues 313 to 347; that stretch reads GNETKDNSSSLDSIVSSSVPTEEDRLIPQSSEDGH. Residues 320-330 are compositionally biased toward low complexity; it reads SSSLDSIVSSS. The span at 334 to 347 shows a compositional bias: basic and acidic residues; that stretch reads EEDRLIPQSSEDGH.

Belongs to the NIPA (TC 2.A.7) family. In terms of assembly, homodimer.

The protein localises to the cell membrane. It is found in the early endosome. Acts as a Mg(2+) transporter. Can also transport other divalent cations such as Fe(2+), Sr(2+), Ba(2+), Mn(2+) and Co(2+) but to a much less extent than Mg(2+). This is Probable magnesium transporter NIPA8 from Arabidopsis thaliana (Mouse-ear cress).